Consider the following 729-residue polypeptide: DNA gyrase subunit B, chloroplastic/mitochondrial (729 aa).

Residues 510–617 (SEIFIVEGDS…RYQKALFDEG (108 aa)) form the Toprim domain. Residues glutamate 516, aspartate 590, and aspartate 592 each contribute to the Mg(2+) site.

This sequence belongs to the type II topoisomerase GyrB family. Made up of two chains. The A chain is responsible for DNA breakage and rejoining; the B chain catalyzes ATP hydrolysis. Mg(2+) serves as cofactor. Mn(2+) is required as a cofactor. The cofactor is Ca(2+).

It localises to the plastid. The protein resides in the chloroplast. The protein localises to the mitochondrion. The catalysed reaction is ATP-dependent breakage, passage and rejoining of double-stranded DNA.. In terms of biological role, a type II topoisomerase that negatively supercoils closed circular double-stranded DNA in an ATP-dependent manner. The protein is DNA gyrase subunit B, chloroplastic/mitochondrial (GYRB) of Oryza sativa subsp. japonica (Rice).